A 303-amino-acid chain; its full sequence is Bifunctional protein FolD 2 (303 aa).

Residues Gly-169–Ser-171, Ser-194, and Ile-235 contribute to the NADP(+) site.

This sequence belongs to the tetrahydrofolate dehydrogenase/cyclohydrolase family. In terms of assembly, homodimer.

It carries out the reaction (6R)-5,10-methylene-5,6,7,8-tetrahydrofolate + NADP(+) = (6R)-5,10-methenyltetrahydrofolate + NADPH. It catalyses the reaction (6R)-5,10-methenyltetrahydrofolate + H2O = (6R)-10-formyltetrahydrofolate + H(+). The protein operates within one-carbon metabolism; tetrahydrofolate interconversion. Its function is as follows. Catalyzes the oxidation of 5,10-methylenetetrahydrofolate to 5,10-methenyltetrahydrofolate and then the hydrolysis of 5,10-methenyltetrahydrofolate to 10-formyltetrahydrofolate. The protein is Bifunctional protein FolD 2 of Ectopseudomonas mendocina (strain ymp) (Pseudomonas mendocina).